The chain runs to 394 residues: Chorismate synthase (394 aa).

Arg42 and Arg48 together coordinate NADP(+). Residues 137-139 (RAS), 258-259 (QA), Gly302, 317-321 (KPIAT), and Arg343 contribute to the FMN site.

It belongs to the chorismate synthase family. As to quaternary structure, homotetramer. Requires FMNH2 as cofactor.

The catalysed reaction is 5-O-(1-carboxyvinyl)-3-phosphoshikimate = chorismate + phosphate. It functions in the pathway metabolic intermediate biosynthesis; chorismate biosynthesis; chorismate from D-erythrose 4-phosphate and phosphoenolpyruvate: step 7/7. Catalyzes the anti-1,4-elimination of the C-3 phosphate and the C-6 proR hydrogen from 5-enolpyruvylshikimate-3-phosphate (EPSP) to yield chorismate, which is the branch point compound that serves as the starting substrate for the three terminal pathways of aromatic amino acid biosynthesis. This reaction introduces a second double bond into the aromatic ring system. The chain is Chorismate synthase from Streptomyces avermitilis (strain ATCC 31267 / DSM 46492 / JCM 5070 / NBRC 14893 / NCIMB 12804 / NRRL 8165 / MA-4680).